We begin with the raw amino-acid sequence, 187 residues long: Putative lipoprotein LppJ (187 aa).

A signal peptide spans 1 to 28; sequence MPHSTADRRLRLTRQALLAAAVVPLLAG. C29 is lipidated: N-palmitoyl cysteine. C29 carries S-diacylglycerol cysteine lipidation.

The protein localises to the cell membrane. This Mycobacterium tuberculosis (strain CDC 1551 / Oshkosh) protein is Putative lipoprotein LppJ (lppJ).